Here is a 100-residue protein sequence, read N- to C-terminus: RING finger protein Z (100 aa).

Gly-2 carries N-myristoyl glycine; by host lipidation. The RING-type; atypical zinc finger occupies 43–79 (CRCCWFANTNLIKCSDHYICLKCLNIMLGKSSFCDIC). The short motif at 93–96 (PSAP) is the PTAP/PSAP motif element.

Belongs to the arenaviridae Z protein family. In terms of assembly, interacts with protein NP; this interaction probably directs the encapsidated genome to budding sites. Interacts (via RING domain) with polymerase L; this interaction inhibits viral transcription and replication, Z partially blocks the product exit tunnel for the releasing nascent RNA product. Interacts with the glycoprotein complex; this interaction plays a role in virion budding. Interacts with host eIF4E; this interaction results in eIF4E reduced affinity for its substrate, the 5'-m7 G cap structure. Interacts (via late-budding domain) with host TSG101; this interaction is essential for budding and release of viral particles. Interacts with host RPLP0; this interaction may serve to load ribosome-like particles inside the virion. Interacts with host PML; this interaction induces PML bodies redistribution in the cytoplasm upon viral infection. Myristoylation is required for the role of RING finger protein Z in assembly and budding.

It localises to the virion. Its subcellular location is the host cytoplasm. The protein resides in the host perinuclear region. The protein localises to the host cell membrane. Plays a crucial role in virion assembly and budding. Expressed late in the virus life cycle, it acts as an inhibitor of viral transcription and RNA synthesis by interacting with the viral polymerase L. Presumably recruits the NP encapsidated genome to cellular membranes at budding sites via direct interaction with NP. Plays critical roles in the final steps of viral release by interacting with host TSG101, a member of the vacuolar protein-sorting pathway and using other cellular host proteins involved in vesicle formation pathway. The budding of the virus progeny occurs after association of protein Z with the viral glycoprotein complex SSP-GP1-GP2 at the cell periphery, step that requires myristoylation of protein Z. Also selectively represses protein production by associating with host eIF4E. In cell-based minigenome assay, has an inhibitory effect on the ribonucleoprotein machinery (vRNP), which is responsible for the replication and transcription of the viral genome. The sequence is that of RING finger protein Z from Homo sapiens (Human).